The primary structure comprises 24 residues: Brevinin-1BYa (24 aa).

Cys-18 and Cys-24 are oxidised to a cystine.

In terms of tissue distribution, expressed by the skin glands.

The protein resides in the secreted. Functionally, antibacterial activity against Gram-positive bacterium S.aureus and Gram-negative bacterium E.coli. High antifungal activity against C.albicans and a strong hemolytic activity. The polypeptide is Brevinin-1BYa (Rana boylii (Foothill yellow-legged frog)).